Reading from the N-terminus, the 365-residue chain is Homeobox protein knotted-1-like 7 (365 aa).

Residues 1–11 show a composition bias toward basic and acidic residues; that stretch reads MEELEGHRGEG. The interval 1–20 is disordered; sequence MEELEGHRGEGRLPPPPPLL. An ELK domain is found at 227–247; sequence ALKRHLLRKYSGYLGGLRKEL. Positions 248-311 form a DNA-binding region, homeobox; TALE-type; that stretch reads SKKRKKGKLP…NQRKRHWKPT (64 aa).

Belongs to the TALE/KNOX homeobox family.

It localises to the nucleus. In terms of biological role, probable transcription factor that may be involved in shoot formation during embryogenesis. This is Homeobox protein knotted-1-like 7 (OSH3) from Oryza sativa subsp. japonica (Rice).